The sequence spans 496 residues: Cytochrome P450 71D180 (496 aa).

The chain crosses the membrane as a helical; Signal-anchor for type II membrane protein span at residues 1 to 21 (MDISISWVVIIVFVLSYLILM). A heme-binding site is contributed by cysteine 435.

It belongs to the cytochrome P450 family. Requires heme as cofactor. In terms of tissue distribution, mostly expressed in flowers and, to a lower extent, in leaves, especially in glandular trichomes.

The protein localises to the membrane. The catalysed reaction is (4R)-limonene + reduced [NADPH--hemoprotein reductase] + O2 = (1R,5S)-carveol + oxidized [NADPH--hemoprotein reductase] + H2O + H(+). It carries out the reaction (4S)-limonene + reduced [NADPH--hemoprotein reductase] + O2 = (1S,5R)-carveol + oxidized [NADPH--hemoprotein reductase] + H2O + H(+). It catalyses the reaction gamma-terpinene + 2 reduced [NADPH--hemoprotein reductase] + 2 O2 = carvacrol + 2 oxidized [NADPH--hemoprotein reductase] + 3 H2O + 2 H(+). It functions in the pathway secondary metabolite biosynthesis; terpenoid biosynthesis. Its function is as follows. Involved in the biosynthesis of phenolic monoterpenes natural products thymol and carvacrol which have a broad range of biological activities acting as antimicrobial compounds, insecticides, antioxidants and pharmaceutical agents. Catalyzes the C2-hydroxylation of gamma-terpinene to produce carvacrol. Mediates also the C6-hydroxylation of (4S)-limonene and (4R)-limonene to form carveol. This is Cytochrome P450 71D180 from Thymus vulgaris (Thyme).